The chain runs to 498 residues: ATP synthase subunit beta, chloroplastic (498 aa).

Threonine 6 carries the post-translational modification Phosphothreonine. Serine 13 bears the Phosphoserine mark. 172–179 serves as a coordination point for ATP; the sequence is GGAGVGKT.

This sequence belongs to the ATPase alpha/beta chains family. F-type ATPases have 2 components, CF(1) - the catalytic core - and CF(0) - the membrane proton channel. CF(1) has five subunits: alpha(3), beta(3), gamma(1), delta(1), epsilon(1). CF(0) has four main subunits: a(1), b(1), b'(1) and c(9-12).

Its subcellular location is the plastid. It localises to the chloroplast thylakoid membrane. The catalysed reaction is ATP + H2O + 4 H(+)(in) = ADP + phosphate + 5 H(+)(out). Its function is as follows. Produces ATP from ADP in the presence of a proton gradient across the membrane. The catalytic sites are hosted primarily by the beta subunits. This chain is ATP synthase subunit beta, chloroplastic, found in Draba nemorosa (Woodland whitlowgrass).